Consider the following 147-residue polypeptide: MTVMSLTATLMAAKKAKGMSFADLEAAIGLDEVWVASLFYGQATASKEEAEKLAGLLSLDAETTAALQEYPTKGSLEPVIPTDPLIYRFYEIMQVYGMPLKDVIQEHFGDGIMSAIDFTIDVDKVEDPKGDRVKIVMCGKFLPYKKW.

Active-site residues include R88, E91, and S114.

It belongs to the cyanase family.

The enzyme catalyses cyanate + hydrogencarbonate + 3 H(+) = NH4(+) + 2 CO2. Functionally, catalyzes the reaction of cyanate with bicarbonate to produce ammonia and carbon dioxide. This is Cyanate hydratase from Parasynechococcus marenigrum (strain WH8102).